We begin with the raw amino-acid sequence, 945 residues long: MRPKWCKTTVLASFPRGSACTARQLKHSANRIYLDARASVPARRAGILNEDRIELPDDAIGASAERRSTRDLRKPSRAGIQHERAVGLMSRQTDNTYPKPLVMPKRGPSAALRLLIVGILLMGAAFIYFLFRDQLGDGFALVLMGVLSMVGVFYLFGAATGLIQFSQRSDHQDLAHSFMDTQPEGTVISDPRGQIVYANQAYARMTGATDADGIRPLDQVLASEPAASDAIYRLTNAVRDGLSAQEEVRISGGLSRGANGSLAPVWYRIKARALEGGAEFKGPLVAWQVADISEERAEQERFFQELQEAINHLDHAPAGFFSANPAGRIIYLNATLAEWLGVDLTQFTPGSLTLNDIVAGSGMALIKAVKAEPGTSRNTVIDLDLIKRNGQSLAVRFYHRVQTARDGMPGTTRTIVLDRAEGDDSSVAQRSAEVRFTRFFNSAPMAIAAVDAEGHTLRTNARFLDIFSGVVDRDAIDRRVKLENVVHERDRETFNKALAAAFAGQASISPVDTVLPGNEERHIRFYMSPVTDLGGEAAEEAAVISAVETTEQKALENQMAQSQKMQAVGQLAGGIAHDFNNVLTAIIMSSDLLLTNHRASDPSFPDIMNIKQNANRAASLVRQLLAFSRRQTLRPEVLDLTDVLADLRMLLARLVGKDIELKIDHGRDLWPVKADLGQFEQVAVNLAVNARDAMPEGGQITLRTRNIPAADAAKLHYRDLPEADYVVFEVEDTGTGIPADVLEKIFEPFFTTKEVGKGTGLGLSMVYGIIKQTGGFIYCDSEVGKGTTFKIFLPRLIEEKRADDAPVAAKEKKVEKATDLSGSATVLLVEDEDAVRMGGVRALQSRGYTVHEAASGVEALEIMEELGGEVDIVVSDVVMPEMDGPTLLRELRKTHPDIKFIFVSGYAEDAFARNLPADAKFGFLPKPFSLKQLATTVKEMLEKQD.

Transmembrane regions (helical) follow at residues 111-131 (ALRL…YFLF) and 139-159 (FALV…FGAA). 3 consecutive PAS domains span residues 171–212 (HQDL…TDAD), 313–341 (LDHA…EWLG), and 432–505 (AEVR…FAGQ). Residues 574 to 797 (GIAHDFNNVL…TFKIFLPRLI (224 aa)) form the Histidine kinase domain. At histidine 577 the chain carries Phosphohistidine; by autocatalysis. One can recognise a Response regulatory domain in the interval 825 to 941 (TVLLVEDEDA…QLATTVKEML (117 aa)). Position 876 is a 4-aspartylphosphate (aspartate 876).

Its subcellular location is the cell inner membrane. The enzyme catalyses ATP + protein L-histidine = ADP + protein N-phospho-L-histidine.. In terms of biological role, component of a regulatory phosphorelay system that controls B.abortus cell growth, division, and intracellular survival inside mammalian host cells. This signaling pathway is composed of CckA, ChpT, CtrA and CpdR. CckA autophosphorylates in the presence of ATP on a conserved His residue and transfers a phosphoryl group to a conserved Asp residue on its C-terminal receiver domain. CckA-P transfers phosphoryl groups to the ChpT phosphotransferase. In Brucella abortus (strain 2308), this protein is Sensor kinase CckA.